The sequence spans 428 residues: AP-1 complex subunit mu-2 (428 aa).

In terms of domain architecture, MHD spans 170 to 426 (KNEVFLDVIE…ITMAGEYELR (257 aa)).

It belongs to the adaptor complexes medium subunit family. As to quaternary structure, adaptor protein complex 1 (AP-1) is a heterotetramer composed of two large adaptins (gamma-type subunit and beta-type subunit), a medium adaptin (mu-type subunit) and a small adaptin (sigma-type subunit). Ubiquitous.

It is found in the golgi apparatus. The protein localises to the trans-Golgi network membrane. It localises to the early endosome membrane. The protein resides in the cytoplasmic vesicle. Its subcellular location is the clathrin-coated vesicle membrane. In terms of biological role, subunit of clathrin-associated adaptor protein complex 1 that plays a role in protein sorting at the trans-Golgi network and early endosomes (TGN/EE). The AP complexes mediate the recruitment of clathrin to membranes and the recognition of sorting signals within the cytosolic tails of transmembrane cargo molecules. Required for KNOLLE localization at the cell plate to mediate cytokinesis. Functions redundantly with AP1M1 in multiple post-Golgi trafficking pathways leading from the TGN to the vacuole, the plasma membrane, and the cell-division plane. This chain is AP-1 complex subunit mu-2 (AP1M2), found in Arabidopsis thaliana (Mouse-ear cress).